We begin with the raw amino-acid sequence, 480 residues long: DnaJ homolog subfamily A member 3, mitochondrial (480 aa).

Arginine 58 bears the Omega-N-methylarginine; by CARM1 mark. The J domain maps to 93-158; that stretch reads DYYQILGVPR…VKRKQYDAYG (66 aa). Position 134 is an N6-acetyllysine (lysine 134). A CR-type zinc finger spans residues 223–301; that stretch reads GVNKEFTVNI…CRGAGQAKQK (79 aa). Residue cysteine 236 participates in Zn(2+) binding. 4 CXXCXGXG motif repeats span residues 236–243, 253–260, 275–282, and 289–296; these read CERCNGKG, CHYCGGSG, CRRCGGRG, and CVVCRGAG. Arginine 238 is subject to Omega-N-methylarginine; by CARM1. Zn(2+)-binding residues include cysteine 239, cysteine 253, cysteine 256, cysteine 275, cysteine 278, cysteine 289, and cysteine 292. Residue arginine 293 is modified to Omega-N-methylarginine; by CARM1. Serine 398 carries the phosphoserine modification. Residues 443 to 456 show a composition bias toward polar residues; the sequence is LTSSGGSTMDSSAG. The tract at residues 443–471 is disordered; sequence LTSSGGSTMDSSAGSKARREAGEDEEGFL.

Interacts with JAK2, HSPA9B and IFN-gammaR2 chain. Interacts with Ras GTPase-activating protein 1 (RASA1). Isoform 2 interacts with MUSK (via the cytoplasmic domain). Tyrosine phosphorylated. As to expression, widely expressed with highest levels in heart, liver, lung and skeletal muscles. Also expressed in keratinocytes; expression level and distribution is altered in basal cell carcinomas.

The protein resides in the mitochondrion matrix. The protein localises to the cytoplasm. Its subcellular location is the cytosol. It localises to the postsynaptic cell membrane. In terms of biological role, modulates apoptotic signal transduction or effector structures within the mitochondrial matrix. Affect cytochrome C release from the mitochondria and caspase 3 activation, but not caspase 8 activation. Isoform 1 increases apoptosis triggered by both TNF and the DNA-damaging agent mytomycin C; in sharp contrast, isoform 2 suppresses apoptosis. Can modulate IFN-gamma-mediated transcriptional activity. Isoform 2 may play a role in neuromuscular junction development as an effector of the MUSK signaling pathway. The protein is DnaJ homolog subfamily A member 3, mitochondrial (DNAJA3) of Homo sapiens (Human).